A 194-amino-acid chain; its full sequence is MVAMAMASLQSSMSSLSLSSNSFLGQPLSPITLSPFLQGKPTEKKCLIVMKLKRWERKECKPNSLPVLHKLHVKVGDTVKVISGHEKGQIGEITKIFKHNSSVIVKDINLKTKHVKSNQEGEPGQINKVEAPIHSSNVMLYSKEKDVTSRVGHKVLENGKRVRYLIKTGEIIDSEENWKKLKEANKKTAEVAAT.

The N-terminal 50 residues, 1-50 (MVAMAMASLQSSMSSLSLSSNSFLGQPLSPITLSPFLQGKPTEKKCLIVM), are a transit peptide targeting the chloroplast.

This sequence belongs to the universal ribosomal protein uL24 family. In terms of assembly, part of the 50S ribosomal subunit.

It is found in the plastid. The protein resides in the chloroplast. One of two assembly initiator proteins, it binds directly to the 5'-end of the 23S rRNA, where it nucleates assembly of the 50S subunit. This is Large ribosomal subunit protein uL24c (RPL24) from Pisum sativum (Garden pea).